The primary structure comprises 55 residues: MGMSFSHLLIVLLIIFVLFGAGKLPQVMSDLAKGLKAFKDGMKDDGSDNDNDKNK.

Residues 1–21 (MGMSFSHLLIVLLIIFVLFGA) traverse the membrane as a helical segment.

It belongs to the TatA/E family. As to quaternary structure, the Tat system comprises two distinct complexes: a TatABC complex, containing multiple copies of TatA, TatB and TatC subunits, and a separate TatA complex, containing only TatA subunits. Substrates initially bind to the TatABC complex, which probably triggers association of the separate TatA complex to form the active translocon.

The protein localises to the cell inner membrane. Functionally, part of the twin-arginine translocation (Tat) system that transports large folded proteins containing a characteristic twin-arginine motif in their signal peptide across membranes. TatA could form the protein-conducting channel of the Tat system. In Rickettsia peacockii (strain Rustic), this protein is Sec-independent protein translocase protein TatA.